Here is a 305-residue protein sequence, read N- to C-terminus: Peroxisome assembly protein 26 (305 aa).

The Cytoplasmic portion of the chain corresponds to M1 to H246. A helical; Signal-anchor for type II membrane protein membrane pass occupies residues L247–L267. The Peroxisomal matrix segment spans residues R268 to D305.

Belongs to the peroxin-26 family. Interacts (via its cytoplasmic domain) with PEX6; interaction is direct and is ATP-dependent. Interacts with PEX1; interaction is indirect and is mediated via interaction with PEX6.

Its subcellular location is the peroxisome membrane. Functionally, peroxisomal docking factor that anchors PEX1 and PEX6 to peroxisome membranes. PEX26 is therefore required for the formation of the PEX1-PEX6 AAA ATPase complex, a complex that mediates the extraction of the PEX5 receptor from peroxisomal membrane. This Mus musculus (Mouse) protein is Peroxisome assembly protein 26.